The following is a 138-amino-acid chain: Histone H3-like centromeric protein A (138 aa).

Residues 1–40 form a disordered region; sequence MGPRRQKRKPETPRRRPASPAPAAPRPTPSLGTSSRPLAR. Gly2 carries the n,N,N-trimethylglycine modification. Ser19 carries the phosphoserine modification. Positions 19 to 28 are enriched in pro residues; that stretch reads SPAPAAPRPT. Positions 37-52 are important for flexibility of DNA ends that protrude from nucleosomes; it reads PLARRRHTVLKEIRTL. The H3-like stretch occupies residues 39–138; it reads ARRRHTVLKE…RIRGIQEGLG (100 aa). Residues 73–114 are CATD; the sequence is CVQFTRGVDFNWQAQALLALQEAAEAFLVHLFEDAYLLSLHA.

It belongs to the histone H3 family. As to quaternary structure, component of centromeric nucleosomes, where DNA is wrapped around a histone octamer core. The octamer contains two molecules each of H2A, H2B, CENPA and H4 assembled in one CENPA-H4 heterotetramer and two H2A-H2B heterodimers. CENPA modulates the DNA-binding characteristics of nucleosomes so that protruding DNA ends have higher flexibility than in nucleosomes containing conventional histone H3. Inhibits binding of histone H1 to nucleosomes, since histone H1 binds preferentially to rigid DNA linkers that protrude from nucleosomes. Nucleosomes containing CENPA also contain histone H2A variants such as MACROH2A and H2A.Z/H2AZ1. The CENPA-H4 heterotetramer is more compact and structurally more rigid than corresponding H3-H4 heterotetramers. Can assemble into nucleosomes that contain both CENPA and histone H3.3; these nucleosomes interact with a single CENPC chain. Heterotrimer composed of HJURP, CENPA and histone H4, where HJURP interacts with the dimer formed by CENPA and histone H4 and prevents tetramerization of CENPA and H4. Component of the CENPA-NAC complex, at least composed of CENPA, CENPC, CENPH, CENPM, CENPN, CENPT and CENPU. Interacts (via CATD domain) with HJURP; the interaction is direct and is required for its localization to centromeres. Interacts with CENPC, CENPN and CENPT; interaction is direct. Part of a centromere complex consisting of CENPA, CENPT and CENPW. Identified in centromere complexes containing histones H2A, H2B and H4, and at least CENPA, CENPB, CENPC, CENPT, CENPN, HJURP, SUPT16H, SSRP1 and RSF1. Can self-associate. The CENPA-H4 heterotetramer can bind DNA by itself (in vitro). Interacts with CDK1, PPP1CA and RBBP7. Trimethylated by NTMT1 at the N-terminal glycine after cleavage of Met-1. Methylation is low before incorporation into nucleosomes and increases with cell cycle progression, with the highest levels in mitotic nucleosomes. In terms of processing, poly-ADP-ribosylated by PARP1.

It is found in the nucleus. It localises to the chromosome. The protein localises to the centromere. In terms of biological role, histone H3-like nucleosomal protein that is specifically found in centromeric nucleosomes. Replaces conventional H3 in the nucleosome core of centromeric chromatin that serves as an assembly site for the inner kinetochore. The presence of CENPA subtly modifies the nucleosome structure and the way DNA is wrapped around the nucleosome and gives rise to protruding DNA ends that are less well-ordered and rigid compared to nucleosomes containing histone H3. May serve as an epigenetic mark that propagates centromere identity through replication and cell division. Required for recruitment and assembly of kinetochore proteins, and as a consequence required for progress through mitosis, chromosome segregation and cytokinesis. The chain is Histone H3-like centromeric protein A (CENPA) from Bos taurus (Bovine).